We begin with the raw amino-acid sequence, 231 residues long: uncharacterized protein (231 aa).

3 helical membrane passes run 6–26 (IKLIFIVCSTVIVTGVLYKYI), 39–59 (NIVSFYALLLLLFSIIYSTFS), and 66–86 (FCFQLAMWAVIFLVIITGYAF).

It is found in the cell membrane. This is an uncharacterized protein from Rickettsia prowazekii (strain Madrid E).